The sequence spans 406 residues: Argininosuccinate synthase (406 aa).

Residues alanine 14–serine 22 and alanine 41 contribute to the ATP site. Positions 92 and 97 each coordinate L-citrulline. Glycine 122 contacts ATP. Residues threonine 124, asparagine 128, and aspartate 129 each coordinate L-aspartate. Asparagine 128 contacts L-citrulline. The L-citrulline site is built by arginine 132, serine 181, serine 190, glutamate 266, and tyrosine 278.

It belongs to the argininosuccinate synthase family. Type 1 subfamily. Homotetramer.

Its subcellular location is the cytoplasm. It carries out the reaction L-citrulline + L-aspartate + ATP = 2-(N(omega)-L-arginino)succinate + AMP + diphosphate + H(+). It functions in the pathway amino-acid biosynthesis; L-arginine biosynthesis; L-arginine from L-ornithine and carbamoyl phosphate: step 2/3. This chain is Argininosuccinate synthase, found in Geobacter metallireducens (strain ATCC 53774 / DSM 7210 / GS-15).